Consider the following 355-residue polypeptide: Mu-like prophage FluMu I protein (355 aa).

It belongs to the peptidase U35 family.

In terms of biological role, potential protease involved in virion morphogenesis. This chain is Mu-like prophage FluMu I protein, found in Haemophilus influenzae (strain ATCC 51907 / DSM 11121 / KW20 / Rd).